Reading from the N-terminus, the 93-residue chain is MTRKKTNPFVAHHLLAKIEKVNMKEEKETIVTWSRASSILPTMVGHTIAIHNGKEHIPIYITNPMVGRKLGEFVPTRHFTSYENARKDTKSRR.

This sequence belongs to the universal ribosomal protein uS19 family.

The protein localises to the plastid. It localises to the chloroplast. Its function is as follows. Protein S19 forms a complex with S13 that binds strongly to the 16S ribosomal RNA. The polypeptide is Small ribosomal subunit protein uS19c (Brachypodium distachyon (Purple false brome)).